The chain runs to 523 residues: MPDMGVFLLATQAVAPPGELLNLALNAGAIAPEGAVLVAMLATLLVDLAGEQAAARWVPPICYAGLGTALVLLAQQWNAPLEPSFLGAFLADNLAISFRAVVALSTLLSLLISWRYAEQSGTPIGEYAAILLAATLGAMLLCGSTDLVSVFVSLETLSVASYLLAGYMKRDARSSEAALKYLLVGSAAAAVFLYGASLLYGLSGTTSLQAIGLALLTSPTPLAALSLVFVLATVAFKIAAVPFHQWTPDVYEGSPTPVVAFLSVGSKAAGFALALRLLVGCFGAFDNQWKLLFTVLAVLSMTLGNVVALAQTSMKRMLAYSSIGQAGFVMIGLVCGTEDGFAAMVLYMAAYLFMNLGAFACIILFSIRTGSDRISDYAGLYQKDPLITLGLSLCLLSLGGIPPMLGFFGKIYLFFAGWADHQYLLVVVGLVTSVVSIYYYISVIKMMVVKEPKEASDVVKSYPSIKWSTIGMPPLRIALVGCVVVTAVGGILSNPLFQWANNAVAGTPLLQEAIALGSQRSIG.

Helical transmembrane passes span 29–49, 57–77, 94–114, 123–143, 147–167, 182–202, 223–243, 255–275, 291–311, 317–337, 345–365, 389–409, 424–444, and 477–497; these read AIAP…VDLA, WVPP…AQQW, LAIS…LISW, PIGE…LLCG, LVSV…LAGY, LLVG…LYGL, AALS…AVPF, PTPV…ALAL, LLFT…ALAQ, MLAY…VCGT, VLYM…IILF, LGLS…GFFG, LLVV…ISVI, and IALV…NPLF.

This sequence belongs to the complex I subunit 2 family. As to quaternary structure, NDH-1 can be composed of about 15 different subunits; different subcomplexes with different compositions have been identified which probably have different functions.

It localises to the cellular thylakoid membrane. It catalyses the reaction a plastoquinone + NADH + (n+1) H(+)(in) = a plastoquinol + NAD(+) + n H(+)(out). The enzyme catalyses a plastoquinone + NADPH + (n+1) H(+)(in) = a plastoquinol + NADP(+) + n H(+)(out). Functionally, NDH-1 shuttles electrons from an unknown electron donor, via FMN and iron-sulfur (Fe-S) centers, to quinones in the respiratory and/or the photosynthetic chain. The immediate electron acceptor for the enzyme in this species is believed to be plastoquinone. Couples the redox reaction to proton translocation, and thus conserves the redox energy in a proton gradient. Cyanobacterial NDH-1 also plays a role in inorganic carbon-concentration. The sequence is that of NAD(P)H-quinone oxidoreductase subunit 2 from Prochlorococcus marinus (strain MIT 9313).